The chain runs to 269 residues: Phosphatidylglycerol--prolipoprotein diacylglyceryl transferase (269 aa).

The next 7 membrane-spanning stretches (helical) occupy residues 10–30, 56–76, 91–111, 126–146, 172–192, 200–220, and 237–257; these read IAVS…LIGF, AIFY…ILFY, IWEG…AMFF, FLAP…FIGG, PSQL…LWFF, YCVS…VEFV, and EGQL…MAGL. Arginine 139 is a binding site for a 1,2-diacyl-sn-glycero-3-phospho-(1'-sn-glycerol).

This sequence belongs to the Lgt family.

Its subcellular location is the cell inner membrane. It carries out the reaction L-cysteinyl-[prolipoprotein] + a 1,2-diacyl-sn-glycero-3-phospho-(1'-sn-glycerol) = an S-1,2-diacyl-sn-glyceryl-L-cysteinyl-[prolipoprotein] + sn-glycerol 1-phosphate + H(+). Its pathway is protein modification; lipoprotein biosynthesis (diacylglyceryl transfer). Functionally, catalyzes the transfer of the diacylglyceryl group from phosphatidylglycerol to the sulfhydryl group of the N-terminal cysteine of a prolipoprotein, the first step in the formation of mature lipoproteins. This Marinomonas sp. (strain MWYL1) protein is Phosphatidylglycerol--prolipoprotein diacylglyceryl transferase.